Reading from the N-terminus, the 919-residue chain is Glutamate receptor ionotropic, kainate 3 (919 aa).

An N-terminal signal peptide occupies residues 1 to 31 (MTAPWRRLRSLVWEYWAGFLVCAFWIPDSRG). Residues 32–563 (MPHVIRIGGI…VFSFLNPLSP (532 aa)) lie on the Extracellular side of the membrane. Residues Asn-70, Asn-76, Asn-278, Asn-381, Asn-415, Asn-426, and Asn-433 are each glycosylated (N-linked (GlcNAc...) asparagine). A disulfide bridge links Cys-99 with Cys-350. Pro-518, Thr-520, and Arg-525 together coordinate L-glutamate. N-linked (GlcNAc...) asparagine glycosylation is found at Asn-548 and Asn-551. The helical transmembrane segment at 564-584 (DIWMYVLLAYLGVSCVLFVIA) threads the bilayer. The Cytoplasmic segment spans residues 585-636 (RFSPYEWYDAHPCNPGSEVVENNFTLLNSFWFGMGSLMQQGSELMPKALSTR). Residues 637 to 657 (IIGGIWWFFTLIIISSYTANL) traverse the membrane as a helical segment. Residues 658–820 (AAFLTVERME…KEASALGIQK (163 aa)) are Extracellular-facing. Residues Ala-691, Thr-692, and Glu-739 each contribute to the L-glutamate site. A glycan (N-linked (GlcNAc...) asparagine) is linked at Asn-752. Residues 821-841 (IGGIFIVLAAGLVLSVLVAVG) traverse the membrane as a helical segment. The Cytoplasmic segment spans residues 842-919 (EFIYKLRKTA…CSTSLAPVFP (78 aa)). A Phosphoserine modification is found at Ser-869. A Glycyl lysine isopeptide (Lys-Gly) (interchain with G-Cter in SUMO1) cross-link involves residue Lys-887.

Belongs to the glutamate-gated ion channel (TC 1.A.10.1) family. GRIK3 subfamily. Homotetramer, and heterotetramer with either GRIK4 or GRIK5. Can form functional heteromeric receptors with GRIK2. Interacts with PRKCABP. Interacts with NETO2. Detected in whole brain, cerebellum, brain cortex and hippocampus.

It localises to the cell membrane. The protein resides in the postsynaptic cell membrane. It carries out the reaction Ca(2+)(in) = Ca(2+)(out). Glutamate-gated receptor activity inhibited by spermine. Ionotropic glutamate receptor that functions as a cation-permeable ligand-gated ion channel, gated by L-glutamate and the glutamatergic agonist kainic acid. Binding of the excitatory neurotransmitter L-glutamate induces a conformation change, leading to the opening of the cation channel, and thereby converts the chemical signal to an electrical impulse. The receptor then desensitizes rapidly and enters a transient inactive state, characterized by the presence of bound agonist. In association with GRIK2, involved in presynaptic facilitation of glutamate release at hippocampal mossy fiber synapses. This is Glutamate receptor ionotropic, kainate 3 (Grik3) from Mus musculus (Mouse).